The chain runs to 1115 residues: MENYGKAVTFSSSATSNLNTGKAIAQYNADAKLMAEFEQSRESGKSFDYSRSVIHAPQNVTEEEMTAYLSRIQRGGLIQPFGCMLAIEEPSFKIVGFSENCFDLLGLKSGVEPPERMSLIGIDARTLFTLSSRASLAKAVASREISLLNPIWVHSKINQKPFYAVLHRIDVGIVIDLEPANSADPALLLAGAVQSQKLAVRAISRLQSLPGGDIGTLCDTVVEDVQKLTGYDRVMVYKFHDDSHGEVVSEIRRSDLEPYLGLHYPATDIPQAARFLFKQNRVRMICDCNAQPVKVLQCEELKQPLCLVNSTLRSPHGCHTKYMANMGSIASLVMAVVINSSESMKLWGLVVCHHTSPRYVPFPLRYACEFLMQAFSLQLYMELQLASQLAEKKILQTQTLLCDMLLRDAPFGIVTQTPSIMDLVRCDGAALYYNGKCWLLGVTPTETQVKDIAEWLLHNHGDSTGLSTDCLSDAGYPGAPLLGDAVSGMATARITSKDFLFWFRSHTAKEVKWGGAKHHPEDKDDGGRMHPRSSFIAFLEVVKSRSLPWEDSEINAIHSLQLIMRDSLQGIGENYMKSVSSPQQNDSDGVRFYELSSMALELVRLVETATVPIFGVDSSGLINGWNAKIAELTGLQANVAIGKYLIDDVTHEDSHETFKALMCRALQGEEDRNVEVKLLKFGNHPTKEVVYLVVNACTSRDYKNDIIGVCFVGQDITPEKAVMDKFVRLQGDYEAIIQSLNPLIPPIFASDENACCSEWNAAMERLTGLVKCEVIGKRLPGEIFGGLCRLKGQDALTKFMILLYQGISGHDTEKLSFGFFDRKGNFIDVFITANKRTDERGNIIGCFCFLQTMAVDHPQISARDIEDDRECLSTLKEFAYIQQQMKNPLNGIRFTHKLLEGTVTSDHQKQFLETSEACEKQILSIIENMDSGGIVDGNRVELKTEEFVIGNVIDAVVSQVMIPLKEKNLQLLHDIPDQIKSLPIYGDQIKLQLVLSDFLLSIVRHAPSPDGWVEIRVSPGLKLIQDGNVFIHIQFRMTHPGQGLPSALIEDMVRGGTRWTTQEGVVLHLSQKLVRMMNGHVHYVREQQKCYFLIDLDFKTQKPRSRESSMDTKAD.

One can recognise a GAF domain in the interval 213 to 383 (DIGTLCDTVV…AFSLQLYMEL (171 aa)). A phytochromobilin-binding site is contributed by cysteine 318. The PAS 1 domain occupies 598-669 (MALELVRLVE…ALMCRALQGE (72 aa)). The 57-residue stretch at 672 to 728 (RNVEVKLLKFGNHPTKEVVYLVVNACTSRDYKNDIIGVCFVGQDITPEKAVMDKFVR) folds into the PAC domain. The 72-residue stretch at 732–803 (DYEAIIQSLN…DALTKFMILL (72 aa)) folds into the PAS 2 domain. Positions 880-1100 (YIQQQMKNPL…YFLIDLDFKT (221 aa)) constitute a Histidine kinase domain.

This sequence belongs to the phytochrome family. As to quaternary structure, homodimer. In terms of processing, contains one covalently linked phytochromobilin chromophore.

Functionally, regulatory photoreceptor which exists in two forms that are reversibly interconvertible by light: the Pr form that absorbs maximally in the red region of the spectrum and the Pfr form that absorbs maximally in the far-red region. Photoconversion of Pr to Pfr induces an array of morphogenic responses, whereas reconversion of Pfr to Pr cancels the induction of those responses. Pfr controls the expression of a number of nuclear genes including those encoding the small subunit of ribulose-bisphosphate carboxylase, chlorophyll A/B binding protein, protochlorophyllide reductase, rRNA, etc. It also controls the expression of its own gene(s) in a negative feedback fashion. This Ipomoea nil (Japanese morning glory) protein is Phytochrome E (PHYE).